The primary structure comprises 185 residues: Elongation factor P (185 aa).

This sequence belongs to the elongation factor P family.

It localises to the cytoplasm. It functions in the pathway protein biosynthesis; polypeptide chain elongation. Its function is as follows. Involved in peptide bond synthesis. Stimulates efficient translation and peptide-bond synthesis on native or reconstituted 70S ribosomes in vitro. Probably functions indirectly by altering the affinity of the ribosome for aminoacyl-tRNA, thus increasing their reactivity as acceptors for peptidyl transferase. This is Elongation factor P from Azoarcus sp. (strain BH72).